The primary structure comprises 709 residues: Twinkle homolog protein, chloroplastic/mitochondrial (709 aa).

The N-terminal 16 residues, 1–16 (MRFLLRLPQIHFRKLS), are a transit peptide targeting the chloroplast and mitochondrion. Residues 280 to 385 (SEVIIVEGEI…KKSEDEHFKD (106 aa)) enclose the Toprim domain. Residues E286, D348, and D350 each contribute to the Mg(2+) site. Residues 430–698 (THGHEYGVST…GSYSDSPVTP (269 aa)) enclose the SF4 helicase domain. 460–467 (GIPNSGKS) lines the ATP pocket.

Mg(2+) serves as cofactor. As to expression, expressed in young leaves and shoot apex tissues. Detected in developing tissues such as cotyledons, sepals, pistils and inflorescences. Nearly undetectable in mature leaves.

The protein localises to the plastid. Its subcellular location is the chloroplast. It localises to the mitochondrion. The enzyme catalyses ATP + H2O = ADP + phosphate + H(+). Has both DNA primase and DNA helicase activities and may be involved in organelle DNA replication. Capable of producing RNA primers of 9 to 18 bases from a single-stranded DNA template. This Arabidopsis thaliana (Mouse-ear cress) protein is Twinkle homolog protein, chloroplastic/mitochondrial.